The chain runs to 148 residues: UPF0756 membrane protein YeaL (148 aa).

Transmembrane regions (helical) follow at residues 14 to 34 (ALGF…LIIV), 51 to 71 (LTIG…SGSL), 80 to 100 (FFNW…WLGG), and 121 to 141 (VLGV…AGLV).

This sequence belongs to the UPF0756 family.

The protein localises to the cell membrane. The protein is UPF0756 membrane protein YeaL of Escherichia fergusonii (strain ATCC 35469 / DSM 13698 / CCUG 18766 / IAM 14443 / JCM 21226 / LMG 7866 / NBRC 102419 / NCTC 12128 / CDC 0568-73).